An 898-amino-acid polypeptide reads, in one-letter code: Eukaryotic translation initiation factor 3 subunit C (898 aa).

Over residues 1-10 (MSRFFHAKED) the composition is skewed to basic and acidic residues. 2 disordered regions span residues 1–38 (MSRF…DDLD) and 162–238 (VTDY…SVTK). Residues 11–23 (SDSDTSSSEDEVE) show a composition bias toward acidic residues. Over residues 24–37 (DQKVNKSAKFRDDL) the composition is skewed to basic and acidic residues. Acidic residues predominate over residues 170-187 (DEDGYETPEDEDDDDFGE). Residues 189–202 (SESKAEKSPGKPSE) show a composition bias toward basic and acidic residues. Residues 209 to 218 (SDSDSDDDDS) show a composition bias toward acidic residues. Residues 219–228 (SNWSSEPESN) are compositionally biased toward low complexity. Positions 630 to 806 (YHMHINVELM…DCLIMHRVEP (177 aa)) constitute a PCI domain. A disordered region spans residues 829–898 (QILEPRTGRG…RRHPQKPRAF (70 aa)). Composition is skewed to basic and acidic residues over residues 850-859 (RNERQGDKQK) and 866-878 (GERR…DGKR). Residues 888 to 898 (QRRHPQKPRAF) show a composition bias toward basic residues.

Belongs to the eIF-3 subunit C family. Component of the eukaryotic translation initiation factor 3 (eIF-3) complex.

The protein localises to the cytoplasm. Component of the eukaryotic translation initiation factor 3 (eIF-3) complex, which is involved in protein synthesis of a specialized repertoire of mRNAs and, together with other initiation factors, stimulates binding of mRNA and methionyl-tRNAi to the 40S ribosome. The eIF-3 complex specifically targets and initiates translation of a subset of mRNAs involved in cell proliferation. This Caenorhabditis elegans protein is Eukaryotic translation initiation factor 3 subunit C.